A 447-amino-acid polypeptide reads, in one-letter code: Serine/threonine-protein phosphatase 2A 55 kDa regulatory subunit B gamma isoform (447 aa).

WD repeat units follow at residues 22–61, 87–128, 171–209, 220–260, 279–317, 334–375, and 410–446; these read TEAD…KNAP, EIEE…KRPE, GHTY…RSFN, DLTE…LCDK, EIIS…RPIE, ESDC…DVTL, and DFTK…NSDM.

The protein belongs to the phosphatase 2A regulatory subunit B family. PP2A consists of a common heterodimeric core enzyme, composed of a 36 kDa catalytic subunit (subunit C) and a 65 kDa constant regulatory subunit (PR65 or subunit A), that associates with a variety of regulatory subunits. Proteins that associate with the core dimer include three families of regulatory subunits B (the R2/B/PR55/B55, R3/B''/PR72/PR130/PR59 and R5/B'/B56 families), the 48 kDa variable regulatory subunit, viral proteins, and cell signaling molecules. Interacts with IER5.

Its function is as follows. The B regulatory subunit might modulate substrate selectivity and catalytic activity, and might also direct the localization of the catalytic enzyme to a particular subcellular compartment. This Mus musculus (Mouse) protein is Serine/threonine-protein phosphatase 2A 55 kDa regulatory subunit B gamma isoform (Ppp2r2c).